The following is a 94-amino-acid chain: MKRKIIVACGGAVATSTMAAEEIKELCQNHNIPVELIQCRVNEIETYMDGVHLICTTAKVDRSFGDIPLVHGMPFISGIGIEALQNKILTILQG.

Residues 1-94 (MKRKIIVACG…QNKILTILQG (94 aa)) enclose the PTS EIIB type-2 domain. Catalysis depends on C9, which acts as the Phosphocysteine intermediate; for EIIB activity. C9 carries the post-translational modification Phosphocysteine; by EIIA.

In terms of assembly, forms a complex with one each of subunit of GatA, GatB and 2 subunits of GatC.

Its subcellular location is the cytoplasm. It carries out the reaction galactitol(out) + N(pros)-phospho-L-histidyl-[protein] = galactitol 1-phosphate(in) + L-histidyl-[protein]. In terms of biological role, the phosphoenolpyruvate-dependent sugar phosphotransferase system (PTS), a major carbohydrate active transport system, catalyzes the phosphorylation of incoming sugar substrates concomitant with their translocation across the cell membrane. The enzyme II complex composed of GatA, GatB and GatC is involved in galactitol transport. It can also use D-glucitol. The sequence is that of PTS system galactitol-specific EIIB component from Escherichia coli (strain K12).